We begin with the raw amino-acid sequence, 113 residues long: Putative pterin-4-alpha-carbinolamine dehydratase (113 aa).

It belongs to the pterin-4-alpha-carbinolamine dehydratase family.

It carries out the reaction (4aS,6R)-4a-hydroxy-L-erythro-5,6,7,8-tetrahydrobiopterin = (6R)-L-erythro-6,7-dihydrobiopterin + H2O. This Legionella pneumophila (strain Lens) protein is Putative pterin-4-alpha-carbinolamine dehydratase.